The chain runs to 153 residues: 6,7-dimethyl-8-ribityllumazine synthase (153 aa).

5-amino-6-(D-ribitylamino)uracil-binding positions include F22, 56–58 (AFE), and 80–82 (AVI). 85–86 (AT) lines the (2S)-2-hydroxy-3-oxobutyl phosphate pocket. H88 (proton donor) is an active-site residue. F113 provides a ligand contact to 5-amino-6-(D-ribitylamino)uracil. R127 is a binding site for (2S)-2-hydroxy-3-oxobutyl phosphate.

It belongs to the DMRL synthase family.

The enzyme catalyses (2S)-2-hydroxy-3-oxobutyl phosphate + 5-amino-6-(D-ribitylamino)uracil = 6,7-dimethyl-8-(1-D-ribityl)lumazine + phosphate + 2 H2O + H(+). It functions in the pathway cofactor biosynthesis; riboflavin biosynthesis; riboflavin from 2-hydroxy-3-oxobutyl phosphate and 5-amino-6-(D-ribitylamino)uracil: step 1/2. In terms of biological role, catalyzes the formation of 6,7-dimethyl-8-ribityllumazine by condensation of 5-amino-6-(D-ribitylamino)uracil with 3,4-dihydroxy-2-butanone 4-phosphate. This is the penultimate step in the biosynthesis of riboflavin. This Clostridium tetani (strain Massachusetts / E88) protein is 6,7-dimethyl-8-ribityllumazine synthase.